Here is a 465-residue protein sequence, read N- to C-terminus: Pancreatic triacylglycerol lipase (465 aa).

An N-terminal signal peptide occupies residues methionine 1–glycine 16. 2 cysteine pairs are disulfide-bonded: cysteine 20-cysteine 26 and cysteine 107-cysteine 118. Residue serine 169 is the Nucleophile of the active site. Aspartate 193 serves as the catalytic Charge relay system. Glutamate 204, arginine 207, aspartate 209, and aspartate 212 together coordinate Ca(2+). A disulfide bond links cysteine 254 and cysteine 278. Histidine 280 acts as the Charge relay system in catalysis. Intrachain disulfides connect cysteine 302–cysteine 313, cysteine 316–cysteine 321, and cysteine 449–cysteine 465. Residues tryptophan 355–cysteine 465 enclose the PLAT domain.

It belongs to the AB hydrolase superfamily. Lipase family. In terms of assembly, forms a 1:1 stoichiometric complex with (pro)colipase/CLPS. In terms of tissue distribution, expressed in many tissues with highest expression in liver. During hibernation there is a significant increases in expression in heart, white adipose tissue (WAT), and testis; but not in pancreas.

The protein resides in the secreted. It catalyses the reaction a triacylglycerol + H2O = a diacylglycerol + a fatty acid + H(+). The catalysed reaction is 1,2,3-tributanoylglycerol + H2O = dibutanoylglycerol + butanoate + H(+). It carries out the reaction 1,2,3-tri-(9Z-octadecenoyl)-glycerol + H2O = di-(9Z)-octadecenoylglycerol + (9Z)-octadecenoate + H(+). The enzyme catalyses all-trans-retinyl hexadecanoate + H2O = all-trans-retinol + hexadecanoate + H(+). It catalyses the reaction 1,2-di-(9Z-octadecenoyl)-glycerol + H2O = (9Z-octadecenoyl)-glycerol + (9Z)-octadecenoate + H(+). With respect to regulation, inhibited by bile salts, is reactivated by (pro)colipase/CLPS. Plays an important role in fat metabolism. It preferentially splits the esters of long-chain fatty acids at positions 1 and 3, producing mainly 2-monoacylglycerol and free fatty acids, and shows considerably higher activity against insoluble emulsified substrates than against soluble ones. Plays a role in hibernation as a key enzyme that shows high activity at low temperatures. When expressed in the hibernating heart it liberates fatty acids from triglycerides at temperatures as low as 0 degrees Celsius. The sequence is that of Pancreatic triacylglycerol lipase (PNLIP) from Ictidomys tridecemlineatus (Thirteen-lined ground squirrel).